The following is a 236-amino-acid chain: MLVGLIGYGAIGKFLAEWLERNGFEIAAILDVRGEHEKMVRGIDEFLQREMDVAVEAASQQAVKDYAEKILKAGIDLIVLSTGAFADRDFLSRVREVCRKTGRRVYIASGAIGGLDAIFSASELIEEIVLTTRKNWRQFGRKGVIFEGSASEAAQKFPKNLNVAATLSIASGKDVKVRLVADEVEENIHEILVRGEFGEMEIRVRNRPMRENPKTSYLAALSVTRILRNLKEGLVV.

NAD(+) is bound by residues 10–11, D31, 58–59, Y66, 80–81, A111, and N162; these read AI, AS, and LS. Residue H189 is part of the active site. 212–215 is a binding site for NAD(+); the sequence is NPKT.

It belongs to the L-aspartate dehydrogenase family. In terms of assembly, homodimer.

It catalyses the reaction L-aspartate + NADP(+) + H2O = oxaloacetate + NH4(+) + NADPH + H(+). The catalysed reaction is L-aspartate + NAD(+) + H2O = oxaloacetate + NH4(+) + NADH + H(+). It participates in cofactor biosynthesis; NAD(+) biosynthesis; iminoaspartate from L-aspartate (dehydrogenase route): step 1/1. In terms of biological role, specifically catalyzes the NAD or NADP-dependent dehydrogenation of L-aspartate to iminoaspartate. In Archaeoglobus fulgidus (strain ATCC 49558 / DSM 4304 / JCM 9628 / NBRC 100126 / VC-16), this protein is L-aspartate dehydrogenase.